The following is a 395-amino-acid chain: F-box/kelch-repeat protein At4g39570 (395 aa).

The span at 1–25 (MSSPERKRKRVTSTKNPSVKKKKKI) shows a compositional bias: basic residues. The interval 1 to 29 (MSSPERKRKRVTSTKNPSVKKKKKISPVP) is disordered. Residues 29–75 (PTPIPSLPDDLLVSIFARVSRLYYPILSLVSKSFRSLLRSPELYETR) form the F-box domain. Kelch repeat units lie at residues 150–197 (DIYF…VIDG) and 198–246 (KIYV…RSAY).

The protein is F-box/kelch-repeat protein At4g39570 of Arabidopsis thaliana (Mouse-ear cress).